The following is a 201-amino-acid chain: Ras-related protein Rab-9B (201 aa).

GTP-binding residues include V18, G19, K20, S21, S22, D33, S34, A36, H38, and T39. Residue S21 coordinates Mg(2+). The Switch 1 signature appears at 31-42; sequence KFDSQAFHTIGV. Phosphoserine is present on S34. Mg(2+) contacts are provided by T39 and D62. Positions 64–78 match the Switch 2 motif; it reads AGQERFKSLRTPFYR. G65, N124, K125, A155, and K156 together coordinate GTP. 2 S-geranylgeranyl cysteine lipidation sites follow: C200 and C201.

It belongs to the small GTPase superfamily. Rab family. In terms of assembly, interacts (GTP-bound form) with SGSM1; the GDP-bound form has much lower affinity for SGSM1. The GTP-bound form but not the GDP-bound form interacts with HPS4 and the BLOC-3 complex (heterodimer of HPS1 and HPS4) but does not interact with HPS1 alone. Interacts (GTP-bound form) with NDE1. The cofactor is Mg(2+).

The protein resides in the cell membrane. Its subcellular location is the cytoplasmic vesicle. It localises to the phagosome membrane. The enzyme catalyses GTP + H2O = GDP + phosphate + H(+). Regulated by guanine nucleotide exchange factors (GEFs) which promote the exchange of bound GDP for free GTP. Regulated by GTPase activating proteins (GAPs) which increase the GTP hydrolysis activity. Inhibited by GDP dissociation inhibitors (GDIs). The small GTPases Rab are key regulators of intracellular membrane trafficking, from the formation of transport vesicles to their fusion with membranes. Rabs cycle between an inactive GDP-bound form and an active GTP-bound form that is able to recruit to membranes different sets of downstream effectors directly responsible for vesicle formation, movement, tethering and fusion. RAB9B is involved in the transport of proteins between the endosomes and the trans Golgi network. May use NDE1/NDEL1 as an effector to interact with the dynein motor complex in order to control retrograde trafficking of RAB9-associated late endosomes to the TGN. The sequence is that of Ras-related protein Rab-9B from Mus musculus (Mouse).